The chain runs to 429 residues: Serine--tRNA ligase (429 aa).

Residue T235–E237 coordinates L-serine. Residue R266–E268 participates in ATP binding. E289 is an L-serine binding site. Position 353–356 (E353–S356) interacts with ATP. L-serine is bound at residue S389.

It belongs to the class-II aminoacyl-tRNA synthetase family. Type-1 seryl-tRNA synthetase subfamily. Homodimer. The tRNA molecule binds across the dimer.

It is found in the cytoplasm. It carries out the reaction tRNA(Ser) + L-serine + ATP = L-seryl-tRNA(Ser) + AMP + diphosphate + H(+). The enzyme catalyses tRNA(Sec) + L-serine + ATP = L-seryl-tRNA(Sec) + AMP + diphosphate + H(+). It participates in aminoacyl-tRNA biosynthesis; selenocysteinyl-tRNA(Sec) biosynthesis; L-seryl-tRNA(Sec) from L-serine and tRNA(Sec): step 1/1. Functionally, catalyzes the attachment of serine to tRNA(Ser). Is also able to aminoacylate tRNA(Sec) with serine, to form the misacylated tRNA L-seryl-tRNA(Sec), which will be further converted into selenocysteinyl-tRNA(Sec). This is Serine--tRNA ligase from Histophilus somni (strain 129Pt) (Haemophilus somnus).